Here is a 287-residue protein sequence, read N- to C-terminus: tRNA-cytidine(32) 2-sulfurtransferase (287 aa).

The PP-loop motif signature appears at serine 58–serine 63. Residues cysteine 133, cysteine 136, and cysteine 224 each coordinate [4Fe-4S] cluster.

The protein belongs to the TtcA family. As to quaternary structure, homodimer. Mg(2+) is required as a cofactor. [4Fe-4S] cluster serves as cofactor.

The protein resides in the cytoplasm. It catalyses the reaction cytidine(32) in tRNA + S-sulfanyl-L-cysteinyl-[cysteine desulfurase] + AH2 + ATP = 2-thiocytidine(32) in tRNA + L-cysteinyl-[cysteine desulfurase] + A + AMP + diphosphate + H(+). Its pathway is tRNA modification. Functionally, catalyzes the ATP-dependent 2-thiolation of cytidine in position 32 of tRNA, to form 2-thiocytidine (s(2)C32). The sulfur atoms are provided by the cysteine/cysteine desulfurase (IscS) system. This Dinoroseobacter shibae (strain DSM 16493 / NCIMB 14021 / DFL 12) protein is tRNA-cytidine(32) 2-sulfurtransferase.